A 99-amino-acid polypeptide reads, in one-letter code: Cytochrome c2 iso-1 (99 aa).

4 residues coordinate heme c: Cys-10, Cys-13, His-14, and Met-75.

It belongs to the cytochrome c family. Post-translationally, binds 1 heme c group covalently per subunit.

Cytochrome c2 is found mainly in purple, non-sulfur, photosynthetic bacteria where it functions as the electron donor to the oxidized bacteriochlorophyll in the photophosphorylation pathway. However, it may also have a role in the respiratory chain and is found in some non-photosynthetic bacteria. This is Cytochrome c2 iso-1 from Magnetospirillum fulvum (Rhodospirillum fulvum).